Reading from the N-terminus, the 633-residue chain is uncharacterized protein (633 aa).

Residues 12-43 (ESGTNNYSDTIANGNTLPPRSKKGHSGRRKRS) form a disordered region. Residues 13 to 29 (SGTNNYSDTIANGNTLP) show a composition bias toward polar residues. Positions 31-42 (RSKKGHSGRRKR) are enriched in basic residues. Transmembrane regions (helical) follow at residues 99–118 (ILFGLCCTGTFLKLLISSAL) and 217–233 (NCAFPMTLNLALLITAC). The disordered stretch occupies residues 593-612 (DAETNKATGSAKSENIETKS).

The protein localises to the membrane. This is an uncharacterized protein from Saccharomyces cerevisiae (strain ATCC 204508 / S288c) (Baker's yeast).